The primary structure comprises 366 residues: Tetraacyldisaccharide 4'-kinase (366 aa).

51–58 is an ATP binding site; sequence TVGGTGKT.

Belongs to the LpxK family.

It carries out the reaction a lipid A disaccharide + ATP = a lipid IVA + ADP + H(+). It functions in the pathway glycolipid biosynthesis; lipid IV(A) biosynthesis; lipid IV(A) from (3R)-3-hydroxytetradecanoyl-[acyl-carrier-protein] and UDP-N-acetyl-alpha-D-glucosamine: step 6/6. Its function is as follows. Transfers the gamma-phosphate of ATP to the 4'-position of a tetraacyldisaccharide 1-phosphate intermediate (termed DS-1-P) to form tetraacyldisaccharide 1,4'-bis-phosphate (lipid IVA). The sequence is that of Tetraacyldisaccharide 4'-kinase from Phocaeicola vulgatus (strain ATCC 8482 / DSM 1447 / JCM 5826 / CCUG 4940 / NBRC 14291 / NCTC 11154) (Bacteroides vulgatus).